The sequence spans 183 residues: Capsid protein (183 aa).

Residues 136-183 are disordered; that stretch reads NAPILSTLPETTVVRRRGRSPRRRTPSPRRRRSQSPRRRRSQSRESQC. Basic residues predominate over residues 149 to 176; that stretch reads VRRRGRSPRRRTPSPRRRRSQSPRRRRS. Phosphoserine; by host is present on residues Ser-155, Ser-162, and Ser-170. One copy of the 1; half-length repeat lies at 155–161; it reads SPRRRTP. The tract at residues 155–177 is 3 X 8 AA repeats of S-P-R-R-R-[PR]-S-Q; sequence SPRRRTPSPRRRRSQSPRRRRSQ. The Bipartite nuclear localization signal signature appears at 158–175; it reads RRTPSPRRRRSQSPRRRR. 2 repeat units span residues 162-169 and 170-177. The segment at 177–183 is RNA binding; that stretch reads QSRESQC.

It belongs to the orthohepadnavirus core antigen family. As to quaternary structure, homodimerizes, then multimerizes. Interacts with cytosol exposed regions of viral L glycoprotein present in the reticulum-to-Golgi compartment. Interacts with human FLNB. Phosphorylated form interacts with host importin alpha; this interaction depends on the exposure of the NLS, which itself depends upon genome maturation and/or phosphorylation of the capsid protein. Interacts with host NUP153. In terms of processing, phosphorylated by host SRPK1, SRPK2, and maybe protein kinase C or GAPDH. Phosphorylation is critical for pregenomic RNA packaging. Protein kinase C phosphorylation is stimulated by HBx protein and may play a role in transport of the viral genome to the nucleus at the late step during the viral replication cycle.

Its subcellular location is the virion. The protein localises to the host cytoplasm. Self assembles to form an icosahedral capsid. Most capsids appear to be large particles with an icosahedral symmetry of T=4 and consist of 240 copies of capsid protein, though a fraction forms smaller T=3 particles consisting of 180 capsid proteins. Entering capsids are transported along microtubules to the nucleus. Phosphorylation of the capsid is thought to induce exposure of nuclear localization signal in the C-terminal portion of the capsid protein that allows binding to the nuclear pore complex via the importin (karyopherin-) alpha and beta. Capsids are imported in intact form through the nuclear pore into the nuclear basket, where it probably binds NUP153. Only capsids that contain the mature viral genome can release the viral DNA and capsid protein into the nucleoplasm. Immature capsids get stuck in the basket. Capsids encapsulate the pre-genomic RNA and the P protein. Pre-genomic RNA is reverse-transcribed into DNA while the capsid is still in the cytoplasm. The capsid can then either be directed to the nucleus, providing more genomes for transcription, or bud through the endoplasmic reticulum to provide new virions. The sequence is that of Capsid protein from Homo sapiens (Human).